We begin with the raw amino-acid sequence, 314 residues long: UDP-N-acetylenolpyruvoylglucosamine reductase (314 aa).

The region spanning 25 to 191 is the FAD-binding PCMH-type domain; the sequence is KIGGPADLFA…VRVGMELRWG (167 aa). Residue Arg170 is part of the active site. Ser220 serves as the catalytic Proton donor. The active site involves Glu291.

This sequence belongs to the MurB family. Requires FAD as cofactor.

Its subcellular location is the cytoplasm. It carries out the reaction UDP-N-acetyl-alpha-D-muramate + NADP(+) = UDP-N-acetyl-3-O-(1-carboxyvinyl)-alpha-D-glucosamine + NADPH + H(+). Its pathway is cell wall biogenesis; peptidoglycan biosynthesis. Functionally, cell wall formation. The polypeptide is UDP-N-acetylenolpyruvoylglucosamine reductase (Heliobacterium modesticaldum (strain ATCC 51547 / Ice1)).